The sequence spans 521 residues: Cytokinin dehydrogenase 9 (521 aa).

Residues 1–22 (MRPSLLQYLKLLLLLALGGVTT) form the signal peptide. The N-linked (GlcNAc...) asparagine glycan is linked to N57. The FAD-binding PCMH-type domain maps to 59–237 (SSFPPVAVLH…TRARIPLEPA (179 aa)). Residues A95, G97, and G99 each coordinate FAD. H100 carries the pros-8alpha-FAD histidine modification. Residues S101, Q105, D161, T166, S172, V176, and I227 each contribute to the FAD site. N278, N412, and N418 each carry an N-linked (GlcNAc...) asparagine glycan. Y469 is a binding site for FAD. A glycan (N-linked (GlcNAc...) asparagine) is linked at N472. An FAD-binding site is contributed by Q507.

Belongs to the oxygen-dependent FAD-linked oxidoreductase family. As to quaternary structure, monomer. FAD is required as a cofactor. In terms of tissue distribution, expressed in inflorescence meristems.

The protein resides in the secreted. It localises to the extracellular space. Its subcellular location is the cytoplasm. It is found in the cytosol. The protein localises to the nucleus. It carries out the reaction N(6)-dimethylallyladenine + A + H2O = 3-methyl-2-butenal + adenine + AH2. Its function is as follows. Catalyzes the oxidation of cytokinins, a family of N(6)-substituted adenine derivatives that are plant hormones, where the substituent is an isopentenyl group. Possesses cytokinin oxidase activity toward trans-zeatin (tZ) and N6-(2-isopentenyl)adenine (2iP) in vitro. Functions as a primary strigolactone-responsive gene to regulate rice tillering, plant height, and panicle size, likely via a secondary response gene, RR5, which encodes a cytokinin-inducible rice type-A response regulator that seems to act as negative regulator of the cytokinin signaling. The polypeptide is Cytokinin dehydrogenase 9 (Oryza sativa subsp. japonica (Rice)).